The sequence spans 603 residues: Dual specificity protein phosphatase CDC14A (603 aa).

The segment at 7–162 (ELIGACEFMK…GLQHGFFDFE (156 aa)) is a. A linker region spans residues 163–176 (TFDAEEYEHYERVE). A b region spans residues 177-343 (NGDFNWIVPG…QGDIFRSKLK (167 aa)). The Tyrosine-protein phosphatase domain occupies 179–336 (DFNWIVPGKF…KQASLWVQGD (158 aa)). Cys-278 functions as the Phosphocysteine intermediate in the catalytic mechanism. Position 484 is a phosphoserine (Ser-484). The segment covering 518–538 (NGSTQTPGRNYPELNNNQYTR) has biased composition (polar residues). Residues 518–583 (NGSTQTPGRN…RPSFPGSLSS (66 aa)) are disordered. 2 stretches are compositionally biased toward low complexity: residues 539–558 (SSNSNSSSSSSGLGGNLNSS) and 573–583 (LRPSFPGSLSS). At Ser-592 the chain carries Phosphoserine.

It belongs to the protein-tyrosine phosphatase family. Non-receptor class CDC14 subfamily. As to quaternary structure, interacts with KIF20A. Interaction is required to localize CDC14 to the midzone of the mitotic spindle. In terms of tissue distribution, expressed in the inner ear.

It is found in the nucleus. It localises to the cytoplasm. The protein localises to the cytoskeleton. Its subcellular location is the microtubule organizing center. The protein resides in the centrosome. It is found in the spindle. It localises to the cell projection. The protein localises to the kinocilium. Its subcellular location is the spindle pole. The protein resides in the stereocilium. It carries out the reaction O-phospho-L-tyrosyl-[protein] + H2O = L-tyrosyl-[protein] + phosphate. The enzyme catalyses O-phospho-L-seryl-[protein] + H2O = L-seryl-[protein] + phosphate. It catalyses the reaction O-phospho-L-threonyl-[protein] + H2O = L-threonyl-[protein] + phosphate. In terms of biological role, dual-specificity phosphatase. Required for centrosome separation and productive cytokinesis during cell division. Dephosphorylates SIRT2 around early anaphase. May dephosphorylate the APC subunit FZR1/CDH1, thereby promoting APC-FZR1 dependent degradation of mitotic cyclins and subsequent exit from mitosis. Required for normal hearing. This Mus musculus (Mouse) protein is Dual specificity protein phosphatase CDC14A (Cdc14a).